A 1087-amino-acid chain; its full sequence is Formin-H (1087 aa).

Residues 1–23 (MSFDLESNSSGGSTIGRNSSIRL) show a composition bias toward polar residues. Positions 1–25 (MSFDLESNSSGGSTIGRNSSIRLSS) are disordered. One can recognise a GBD/FH3 domain in the interval 34 to 394 (VSLNEIIDLD…QLEDELKIHP (361 aa)). Composition is skewed to low complexity over residues 416-436 (FGFGSKSKSPSSSPALSSMAK) and 549-558 (SPGSTLSPSP). Disordered stretches follow at residues 416–445 (FGFGSKSKSPSSSPALSSMAKTELKKDNEE), 549–625 (SPGS…PAKP), and 1048–1087 (VDSLRKNLKSTSTTTPNTPPTIKIELPSQSILKPSGQLKK). Residues 433–461 (SMAKTELKKDNEEKQKTIEHLLKQLNKFS) are a coiled coil. The segment covering 569-588 (FGITSSSIHTSTDKLTNSTE) has biased composition (polar residues). The region spanning 589–615 (PILGSPPPPPPPPMSGGGGPPPPPPPP) is the FH1 domain. Positions 592–616 (GSPPPPPPPPMSGGGGPPPPPPPPG) are enriched in pro residues. The FH2 domain maps to 623–1016 (AKPIIKPSVK…ENSKMEDPEK (394 aa)). Positions 1013-1051 (DPEKGGLQDLSSQIRSGQLFKDRRVGDSVIAQMQNVDSL) constitute a DAD domain.

The protein belongs to the formin homology family. Diaphanous subfamily. In terms of assembly, interacts with vasP, proB/profilin-2 and rac1A. Interacts (via GBD/FH3 domain) with activated Rho-GTPases.

It is found in the cytoplasm. It localises to the cell cortex. Its subcellular location is the cytoskeleton. In terms of biological role, formins play an important role in the nucleation of actin and the formation of linear actin filaments. Important for cell migration and formation, elongation and maintenance of filopodia. Specifically controls filopodial dynamics by regulating actin turnover at the barbed ends of actin filaments. The polypeptide is Formin-H (forH) (Dictyostelium discoideum (Social amoeba)).